The following is a 341-amino-acid chain: MTKPIILTGDRPTGKLHIGHYVGSLKNRVLLQNEGSYTLFVFLADQQALTDHAKDPQTIVESIGNVALDYLAVGLDPNKSTLFIQSQIPELAELSMYYMNLVSLARLERNPTVKTEIAQKGFGESIPAGFLVYPVAQAADITAFKANLVPVGTDQKPMIEQTREIVRSFNHAYNCQVLVEPEGIYPENDAAGRLPGLDGNAKMSKSLNNGIFLADDMDTVKKKVMSMYTDPNHIKVEEPGQIEGNMVFHYLDVFGRDEDQKEITAMKEHYQKGGLGDVKTKRYLLDILERELSPIRERRLEYAKDMGQVYQMLQKGSEKAQAVAASTLDEVKSAMGLNYFK.

ATP-binding positions include 11 to 13 and 19 to 20; these read RPT and GH. A 'HIGH' region motif is present at residues 12 to 20; that stretch reads PTGKLHIGH. D140 is a binding site for L-tryptophan. ATP is bound by residues 152-154, L194, and 202-206; these read GTD and KMSKS. The short motif at 202–206 is the 'KMSKS' region element; that stretch reads KMSKS.

This sequence belongs to the class-I aminoacyl-tRNA synthetase family. In terms of assembly, homodimer.

It is found in the cytoplasm. It carries out the reaction tRNA(Trp) + L-tryptophan + ATP = L-tryptophyl-tRNA(Trp) + AMP + diphosphate + H(+). Functionally, catalyzes the attachment of tryptophan to tRNA(Trp). The protein is Tryptophan--tRNA ligase of Streptococcus agalactiae serotype III (strain NEM316).